We begin with the raw amino-acid sequence, 785 residues long: Cadherin-7 (785 aa).

A signal peptide spans 1 to 27 (MKLGKVELCHFLQLIALFLCFSGMSQA). A propeptide spanning residues 28-47 (ELPRSRSKPYFQSGRSRTKR) is cleaved from the precursor. The Extracellular portion of the chain corresponds to 28–607 (ELPRSRSKPY…AYVLPAGLST (580 aa)). 5 Cadherin domains span residues 49-153 (WVWN…EPKF), 154-262 (LDGP…PPRF), 263-377 (PRRS…PPVF), 378-482 (SSPL…APEF), and 482-599 (FAMD…AEAY). Residues Asn449 and Asn530 are each glycosylated (N-linked (GlcNAc...) asparagine). The chain crosses the membrane as a helical span at residues 608–628 (GALIAILACVLTLLVLILLIV). The Cytoplasmic segment spans residues 629–785 (TMRRRKKEPL…YGNGQESLYS (157 aa)).

It is found in the cell membrane. In terms of biological role, cadherins are calcium-dependent cell adhesion proteins. They preferentially interact with themselves in a homophilic manner in connecting cells; cadherins may thus contribute to the sorting of heterogeneous cell types. The chain is Cadherin-7 (Cdh7) from Mus musculus (Mouse).